The primary structure comprises 888 residues: Interference hedgehog (888 aa).

The N-terminal stretch at 1–24 is a signal peptide; sequence MSLTRFSLCLLLTLLLAAIPVYLA. Residues 25–688 are Extracellular-facing; the sequence is SPDPGVRILR…SHNETFNLNP (664 aa). 4 Ig-like C2-type domains span residues 28–123, 134–215, 234–321, and 327–414; these read PGVR…ARLE, EGFK…VRLA, PHLL…SIQL, and PRIV…LQVN. 3 disulfides stabilise this stretch: cysteine 51–cysteine 106, cysteine 155–cysteine 203, and cysteine 257–cysteine 305. Residues asparagine 80, asparagine 185, asparagine 192, asparagine 281, asparagine 336, asparagine 365, asparagine 369, and asparagine 455 are each glycosylated (N-linked (GlcNAc...) asparagine). A disulfide bridge connects residues cysteine 348 and cysteine 396. 2 consecutive Fibronectin type-III domains span residues 450–557 and 565–660; these read PPSA…LQRG and VPSL…TQRP. Heparin-binding residues include arginine 486 and lysine 493. The N-linked (GlcNAc...) asparagine glycan is linked to asparagine 516. Arginine 531 is a binding site for heparin. Residue asparagine 547 is glycosylated (N-linked (GlcNAc...) asparagine). A compositionally biased stretch (polar residues) spans 655–667; sequence GRTQRPRVSTTTE. Residues 655–679 are disordered; that stretch reads GRTQRPRVSTTTEPAVHAMDTTTPS. Asparagine 681 carries an N-linked (GlcNAc...) asparagine glycan. Residues 689–709 form a helical membrane-spanning segment; the sequence is LLTGTIGGGALLVLLVVSACL. The Cytoplasmic portion of the chain corresponds to 710-888; that stretch reads CLCRRRSSRG…SSGSLNSVGV (179 aa). Disordered stretches follow at residues 759–789, 812–864, and 869–888; these read AQQQ…DMSY, SSSL…PGRV, and ARLS…SVGV. Low complexity predominate over residues 760-775; it reads QQQQQQQQQQQQQQQQ. Residues 843-859 are compositionally biased toward polar residues; the sequence is QPTDGSTADSPRLQASN. A compositionally biased stretch (low complexity) spans 872 to 888; that stretch reads SSRSENLSSGSLNSVGV.

Belongs to the immunoglobulin superfamily. IHOG family. As to quaternary structure, homodimer. Heterotetramer; 2 iHog chains bind 2 hh chains when facilitated by heparin, heparin is required to promote high-affinity interactions between hh and iHog.

It localises to the membrane. Its function is as follows. Mediates response to the active Hedgehog (Hh) protein signal in embryos, functioning upstream or at the level of patched (ptc). This Drosophila grimshawi (Hawaiian fruit fly) protein is Interference hedgehog.